We begin with the raw amino-acid sequence, 538 residues long: Myeloid cell nuclear differentiation antigen-like protein (538 aa).

The 87-residue stretch at 1-87 (MAEYKKIVLL…AKKLKTEKAK (87 aa)) folds into the Pyrin domain. Residues 120–306 (SYKSVPSSKK…PQPQNQNIPR (187 aa)) are disordered. Basic and acidic residues-rich tracts occupy residues 135-153 (AKTE…DHLP) and 245-262 (RREE…KEPD). The segment covering 276–305 (SPILHSSSSASSNIPSATNQKPQPQNQNIP) has biased composition (low complexity). Positions 299 to 499 (PQNQNIPRGA…CGDHSFVKIK (201 aa)) constitute an HIN-200 domain.

Belongs to the HIN-200 family. In terms of tissue distribution, highest expression observed in spleen and thymus with moderate levels in bone marrow, lung, skin and heart, low levels in muscle, liver and intestine and little or no expression in brain and pancreas.

The protein localises to the nucleus. Its function is as follows. Suppresses cell growth when expressed ectopically. This Mus musculus (Mouse) protein is Myeloid cell nuclear differentiation antigen-like protein.